The primary structure comprises 174 residues: 5-hydroxymethyl-dUMP N-hydrolase (174 aa).

Ala2 carries the N-acetylalanine modification. Gly27 is a binding site for 5-hydroxymethyl-dUMP. A Phosphoserine modification is found at Ser28. Residues Ile29, Arg30, Gly31, Ser98, Gly100, and Glu104 each coordinate 5-hydroxymethyl-dUMP. Ser98 is subject to Phosphoserine. A phosphoserine mark is found at Ser123, Ser128, Ser138, and Ser169. Residue Ser128 coordinates 5-hydroxymethyl-dUMP.

Belongs to the 2'-deoxynucleoside 5'-phosphate N-hydrolase 1 family. In terms of assembly, monomer and homodimer. In terms of tissue distribution, expressed at low levels in brain, colon, lung, peripheral blood leukocytes, placenta, small intestine, and thymus. Expressed at high levels in heart, kidney, liver, skeletal muscle and spleen. Overexpressed in a significant proportion of breast cancers.

It is found in the cytoplasm. It localises to the nucleus. It catalyses the reaction 5-hydroxymethyl-dUMP + H2O = 5-hydroxymethyluracil + 2-deoxy-D-ribose 5-phosphate. With respect to regulation, inhibited by AMP and GMP. Its function is as follows. Part of a nucleotide salvage pathway that eliminates epigenetically modified 5-hydroxymethyl-dCMP (hmdCMP) in a two-step process entailing deamination to cytotoxic 5-hydroxymethyl-dUMP (hmdUMP), followed by its hydrolysis into 5-hydroxymethyluracil (hmU) and 2-deoxy-D-ribose 5-phosphate (deoxyribosephosphate). Catalyzes the second step in that pathway, the hydrolysis of the N-glycosidic bond in hmdUMP, degrading this cytotoxic nucleotide to avoid its genomic integration. This chain is 5-hydroxymethyl-dUMP N-hydrolase, found in Homo sapiens (Human).